Consider the following 273-residue polypeptide: 3-methyl-2-oxobutanoate hydroxymethyltransferase (273 aa).

Mg(2+)-binding residues include aspartate 53 and aspartate 92. Residues 53-54 (DS), aspartate 92, and lysine 122 contribute to the 3-methyl-2-oxobutanoate site. Glutamate 124 is a binding site for Mg(2+). The Proton acceptor role is filled by glutamate 191.

It belongs to the PanB family. In terms of assembly, homodecamer; pentamer of dimers. The cofactor is Mg(2+).

The protein resides in the cytoplasm. It carries out the reaction 3-methyl-2-oxobutanoate + (6R)-5,10-methylene-5,6,7,8-tetrahydrofolate + H2O = 2-dehydropantoate + (6S)-5,6,7,8-tetrahydrofolate. The protein operates within cofactor biosynthesis; (R)-pantothenate biosynthesis; (R)-pantoate from 3-methyl-2-oxobutanoate: step 1/2. Functionally, catalyzes the reversible reaction in which hydroxymethyl group from 5,10-methylenetetrahydrofolate is transferred onto alpha-ketoisovalerate to form ketopantoate. The chain is 3-methyl-2-oxobutanoate hydroxymethyltransferase from Porphyromonas gingivalis (strain ATCC 33277 / DSM 20709 / CIP 103683 / JCM 12257 / NCTC 11834 / 2561).